Reading from the N-terminus, the 312-residue chain is Pyrimidine-specific ribonucleoside hydrolase RihA (312 aa).

The active site involves H240.

The protein belongs to the IUNH family. RihA subfamily.

Hydrolyzes cytidine or uridine to ribose and cytosine or uracil, respectively. In Shewanella woodyi (strain ATCC 51908 / MS32), this protein is Pyrimidine-specific ribonucleoside hydrolase RihA.